We begin with the raw amino-acid sequence, 154 residues long: UPF0225 protein YPTB2098 (154 aa).

Belongs to the UPF0225 family.

The sequence is that of UPF0225 protein YPTB2098 from Yersinia pseudotuberculosis serotype I (strain IP32953).